The sequence spans 328 residues: Nucleotide-binding protein BL0705 (328 aa).

Residues 1 to 35 (MNQQTTNRDTGEAAATNAPANSATSTSTPDNQPTP) are disordered. Positions 13 to 29 (AAATNAPANSATSTSTP) are enriched in low complexity. 46 to 53 (GMSGAGRS) contributes to the ATP binding site. 101 to 104 (DVRS) is a GTP binding site.

This sequence belongs to the RapZ-like family.

Its function is as follows. Displays ATPase and GTPase activities. The polypeptide is Nucleotide-binding protein BL0705 (Bifidobacterium longum (strain NCC 2705)).